Consider the following 40-residue polypeptide: Sarcotoxin-1D (40 aa).

The protein belongs to the cecropin family.

The protein localises to the secreted. Sarcotoxins, which are potent bactericidal proteins, are produced in response to injury. They are cytotoxic to both Gram-positive and Gram-negative bacteria. The protein is Sarcotoxin-1D of Sarcophaga peregrina (Flesh fly).